Reading from the N-terminus, the 256-residue chain is ATP synthase subunit a (256 aa).

6 consecutive transmembrane segments (helical) span residues 33-53, 92-112, 122-142, 148-168, 191-211, and 235-255; these read ITTF…LTLL, YFPL…IGMI, MVFI…IGLY, FFAL…LVLI, GHLL…VSIV, and MIQS…GLYL.

It belongs to the ATPase A chain family. As to quaternary structure, F-type ATPases have 2 components, CF(1) - the catalytic core - and CF(0) - the membrane proton channel. CF(1) has five subunits: alpha(3), beta(3), gamma(1), delta(1), epsilon(1). CF(0) has three main subunits: a, b and c.

The protein resides in the mitochondrion inner membrane. Functionally, mitochondrial membrane ATP synthase (F(1)F(0) ATP synthase or Complex V) produces ATP from ADP in the presence of a proton gradient across the membrane which is generated by electron transport complexes of the respiratory chain. F-type ATPases consist of two structural domains, F(1) - containing the extramembraneous catalytic core and F(0) - containing the membrane proton channel, linked together by a central stalk and a peripheral stalk. During catalysis, ATP synthesis in the catalytic domain of F(1) is coupled via a rotary mechanism of the central stalk subunits to proton translocation. Key component of the proton channel; it may play a direct role in the translocation of protons across the membrane. This Wickerhamomyces canadensis (Yeast) protein is ATP synthase subunit a (ATP6).